A 507-amino-acid polypeptide reads, in one-letter code: ATP synthase subunit alpha, chloroplastic (507 aa).

170–177 (GDRQTGKT) is an ATP binding site.

The protein belongs to the ATPase alpha/beta chains family. As to quaternary structure, F-type ATPases have 2 components, CF(1) - the catalytic core - and CF(0) - the membrane proton channel. CF(1) has five subunits: alpha(3), beta(3), gamma(1), delta(1), epsilon(1). CF(0) has four main subunits: a, b, b' and c.

The protein resides in the plastid. It is found in the chloroplast thylakoid membrane. The enzyme catalyses ATP + H2O + 4 H(+)(in) = ADP + phosphate + 5 H(+)(out). Its function is as follows. Produces ATP from ADP in the presence of a proton gradient across the membrane. The alpha chain is a regulatory subunit. The chain is ATP synthase subunit alpha, chloroplastic from Gossypium hirsutum (Upland cotton).